The following is a 328-amino-acid chain: Sulfate adenylyltransferase subunit 2 (328 aa).

Positions 305-328 (ERQGRVIDRDSTGSMERKKAEGYF) are disordered.

It belongs to the PAPS reductase family. CysD subfamily. Heterodimer composed of CysD, the smaller subunit, and CysN.

It carries out the reaction sulfate + ATP + H(+) = adenosine 5'-phosphosulfate + diphosphate. Its pathway is sulfur metabolism; hydrogen sulfide biosynthesis; sulfite from sulfate: step 1/3. Its function is as follows. With CysN forms the ATP sulfurylase (ATPS) that catalyzes the adenylation of sulfate producing adenosine 5'-phosphosulfate (APS) and diphosphate, the first enzymatic step in sulfur assimilation pathway. APS synthesis involves the formation of a high-energy phosphoric-sulfuric acid anhydride bond driven by GTP hydrolysis by CysN coupled to ATP hydrolysis by CysD. The sequence is that of Sulfate adenylyltransferase subunit 2 from Rhodopseudomonas palustris (strain BisB18).